An 892-amino-acid polypeptide reads, in one-letter code: Alpha-actinin-1 (892 aa).

Position 1 is an N-acetylmethionine (Met-1). The interval 1–247 (MDHYDSQQTN…IMTYVSSFYH (247 aa)) is actin-binding. The residue at position 6 (Ser-6) is a Phosphoserine. Tyr-12 carries the post-translational modification Phosphotyrosine; by FAK1. Calponin-homology (CH) domains lie at 31-135 (KQQR…LRFA) and 144-250 (TSAK…HAFS). 2 positions are modified to N6-acetyllysine: Lys-95 and Lys-195. 4 Spectrin repeats span residues 274 to 384 (QLME…WLLN), 394 to 499 (HLAE…ALER), 509 to 620 (QLYL…ALTE), and 630 to 733 (RLRK…EVEN). The tract at residues 274 to 733 (QLMEDYEKLA…IARTINEVEN (460 aa)) is interaction with DDN. Ser-471 bears the Phosphoserine mark. The residue at position 676 (Lys-676) is an N6-acetyllysine. Ser-677 is modified (phosphoserine). 2 consecutive EF-hand domains span residues 746 to 781 (EQMNEFRASFNHFDRDHSGTLGPEEFKACLISLGYD) and 787 to 822 (QGEAEFARIMSIVDPNRLGVVTFQAFIDFMSRETAD). Residues Asp-759, Asp-761, Ser-763, Thr-765, and Glu-770 each contribute to the Ca(2+) site. Residue Ser-890 is modified to Phosphoserine.

It belongs to the alpha-actinin family. In terms of assembly, homodimer; antiparallel. Interacts with MYOZ2, TTID and LPP. Interacts with DDN. Interacts with PSD. Interacts with MICALL2. Interacts with DNM2 and CTTN. Interacts with PDLIM1. Interacts with PDLIM2. Interacts with PDLIM4 (via PDZ domain). Interacts with IGSF8.

The protein resides in the cytoplasm. It is found in the cytoskeleton. Its subcellular location is the myofibril. It localises to the sarcomere. The protein localises to the z line. The protein resides in the cell membrane. It is found in the cell junction. Its subcellular location is the cell projection. It localises to the ruffle. Functionally, F-actin cross-linking protein which is thought to anchor actin to a variety of intracellular structures. Association with IGSF8 regulates the immune synapse formation and is required for efficient T-cell activation. This is Alpha-actinin-1 (ACTN1) from Bos taurus (Bovine).